A 216-amino-acid polypeptide reads, in one-letter code: 3-isopropylmalate dehydratase small subunit (216 aa).

Belongs to the LeuD family. LeuD type 1 subfamily. As to quaternary structure, heterodimer of LeuC and LeuD.

It catalyses the reaction (2R,3S)-3-isopropylmalate = (2S)-2-isopropylmalate. It participates in amino-acid biosynthesis; L-leucine biosynthesis; L-leucine from 3-methyl-2-oxobutanoate: step 2/4. In terms of biological role, catalyzes the isomerization between 2-isopropylmalate and 3-isopropylmalate, via the formation of 2-isopropylmaleate. The sequence is that of 3-isopropylmalate dehydratase small subunit from Ralstonia nicotianae (strain ATCC BAA-1114 / GMI1000) (Ralstonia solanacearum).